The sequence spans 1197 residues: Probable DNA polymerase (1197 aa).

It belongs to the DNA polymerase type-B family.

It localises to the mitochondrion. It carries out the reaction DNA(n) + a 2'-deoxyribonucleoside 5'-triphosphate = DNA(n+1) + diphosphate. The protein is Probable DNA polymerase of Podospora anserina (Pleurage anserina).